The chain runs to 93 residues: uncharacterized protein (93 aa).

This is an uncharacterized protein from Saccharomyces cerevisiae (strain ATCC 204508 / S288c) (Baker's yeast).